A 736-amino-acid polypeptide reads, in one-letter code: Prolyl 3-hydroxylase 1 (736 aa).

The N-terminal stretch at 1 to 22 (MAVRALKLLTTLLAVVAAASQA) is a signal peptide. TPR repeat units follow at residues 35–68 (PDLLFAEGTAAYARGDWPGVVLSMERALRSRAAL), 143–176 (RSPYNYLQVAYFKINKLEKAVAAAHTFFVGNPEH), 205–238 (HMQEFRLGVRLYSEEQPQEAVPHLEAALQEYFVA), and 301–334 (PSHYNYLQFAYYNIGNYTQAVECAKTYLLFFPND). An N-linked (GlcNAc...) asparagine glycan is attached at Asn316. Residues 401-439 (KRLQEKQKSERETAVRISQEIGNLMKEIETLVEEKTKES) adopt a coiled-coil conformation. N-linked (GlcNAc...) asparagine glycans are attached at residues Asn467 and Asn540. A Fe2OG dioxygenase domain is found at 564–678 (SHLVCRTAIE…RCAIALWFTL (115 aa)). Positions 587, 589, and 659 each coordinate Fe cation. Arg669 is a catalytic residue. The disordered stretch occupies residues 699 to 736 (SPEEMDLSQEQPLDAQQGPPEPAQESLSGSESKPKDEL). The short motif at 733–736 (KDEL) is the Prevents secretion from ER element.

The protein belongs to the leprecan family. Fe cation is required as a cofactor. L-ascorbate serves as cofactor. O-glycosylated; chondroitin sulfate.

The protein resides in the endoplasmic reticulum. Its subcellular location is the secreted. The protein localises to the extracellular space. It localises to the extracellular matrix. The catalysed reaction is L-prolyl-[collagen] + 2-oxoglutarate + O2 = trans-3-hydroxy-L-prolyl-[collagen] + succinate + CO2. Its function is as follows. Basement membrane-associated chondroitin sulfate proteoglycan (CSPG). Has prolyl 3-hydroxylase activity catalyzing the post-translational formation of 3-hydroxyproline in -Xaa-Pro-Gly- sequences in collagens, especially types IV and V. May be involved in the secretory pathway of cells. Has growth suppressive activity in fibroblasts. The polypeptide is Prolyl 3-hydroxylase 1 (Homo sapiens (Human)).